We begin with the raw amino-acid sequence, 116 residues long: U3-theraphotoxin-Lsp1a (116 aa).

An N-terminal signal peptide occupies residues 1 to 17; that stretch reads MKLSTFIIMISLAVALA. Residues 18–50 constitute a propeptide that is removed on maturation; the sequence is TWPSEHIEGSDSETKLNVELGPYALADRAEKGK.

Belongs to the neurotoxin 25 family. F7 subfamily. Post-translationally, contains 3 disulfide bonds. In terms of tissue distribution, expressed by the venom gland.

The protein resides in the secreted. This Lasiodora sp. (strain IBSP 8539) (Brazilian salmon pink birdeater) protein is U3-theraphotoxin-Lsp1a.